A 351-amino-acid chain; its full sequence is Selenide, water dikinase (351 aa).

Sec15 is an active-site residue. Position 15 (Sec15) is a non-standard amino acid, selenocysteine. Residues Lys18 and 47-49 (DNE) each bind ATP. Asp50 is a Mg(2+) binding site. Residues Asp67, Asp90, and 138 to 140 (GHS) each bind ATP. A Mg(2+)-binding site is contributed by Asp90. Position 227 (Asp227) interacts with Mg(2+).

The protein belongs to the selenophosphate synthase 1 family. Class I subfamily. In terms of assembly, homodimer. Mg(2+) serves as cofactor.

The enzyme catalyses hydrogenselenide + ATP + H2O = selenophosphate + AMP + phosphate + 2 H(+). Synthesizes selenophosphate from selenide and ATP. The chain is Selenide, water dikinase from Nitratidesulfovibrio vulgaris (strain ATCC 29579 / DSM 644 / CCUG 34227 / NCIMB 8303 / VKM B-1760 / Hildenborough) (Desulfovibrio vulgaris).